Consider the following 156-residue polypeptide: ATP synthase subunit b (156 aa).

Residues 7–27 (LIGQLIAFALFVAFCMKFVWP) traverse the membrane as a helical segment.

Belongs to the ATPase B chain family. F-type ATPases have 2 components, F(1) - the catalytic core - and F(0) - the membrane proton channel. F(1) has five subunits: alpha(3), beta(3), gamma(1), delta(1), epsilon(1). F(0) has three main subunits: a(1), b(2) and c(10-14). The alpha and beta chains form an alternating ring which encloses part of the gamma chain. F(1) is attached to F(0) by a central stalk formed by the gamma and epsilon chains, while a peripheral stalk is formed by the delta and b chains.

It is found in the cell inner membrane. Functionally, f(1)F(0) ATP synthase produces ATP from ADP in the presence of a proton or sodium gradient. F-type ATPases consist of two structural domains, F(1) containing the extramembraneous catalytic core and F(0) containing the membrane proton channel, linked together by a central stalk and a peripheral stalk. During catalysis, ATP synthesis in the catalytic domain of F(1) is coupled via a rotary mechanism of the central stalk subunits to proton translocation. In terms of biological role, component of the F(0) channel, it forms part of the peripheral stalk, linking F(1) to F(0). This is ATP synthase subunit b from Actinobacillus pleuropneumoniae serotype 7 (strain AP76).